The chain runs to 1203 residues: Probable phospholipid-transporting ATPase 11 (1203 aa).

The Cytoplasmic portion of the chain corresponds to 1-71 (MTKCRRRRLH…STKYTLASFI (71 aa)). The helical transmembrane segment at 72–93 (PKSLFEQFRRVANFYFLVTGVL) threads the bilayer. Residues 94–97 (SLTA) lie on the Extracellular side of the membrane. Residues 98–120 (LSPYSPISALLPLTFVIAASMVK) form a helical membrane-spanning segment. Residues 121-303 (EAIEDWGRKK…SRIERKMDKI (183 aa)) are Cytoplasmic-facing. A helical membrane pass occupies residues 304–325 (IYLMFGVVFLMSFIGSIVFGIE). The Extracellular segment spans residues 326–363 (TREDRVRNGGRTERWYLRPDNADIFFDPDRAPMAAVYH). A helical membrane pass occupies residues 364–381 (FFTAVMLYSYFIPISLYV). Topologically, residues 382-921 (SIEIVKVLQS…HGHWCYSRIS (540 aa)) are cytoplasmic. The active-site 4-aspartylphosphate intermediate is Asp-429. Asp-866 and Asp-870 together coordinate Mg(2+). A helical membrane pass occupies residues 922-941 (SMICYFFYKNITFGVTVFLY). At 942-955 (EAYTSFSAQPAYND) the chain is on the extracellular side. A helical transmembrane segment spans residues 956-975 (WFLSLFNVFFSSLPVIALGV). At 976–1005 (FDQDVSARYCYKFPLLYQEGVQNLLFSWKR) the chain is on the cytoplasmic side. Residues 1006–1028 (IIGWMFNGVFTALAIFFLCKESL) form a helical membrane-spanning segment. Residues 1029-1041 (KHQLYNPNGKTAG) are Extracellular-facing. Residues 1042-1064 (REILGGTMYTCVVWVVNLQMALA) traverse the membrane as a helical segment. Topologically, residues 1065–1070 (ISYFTW) are cytoplasmic. A helical transmembrane segment spans residues 1071–1091 (LQHIVIWGSVAFWYIFLMIYG). Residues 1092–1108 (AITPSFSTDAYKVFIEA) are Extracellular-facing. A helical membrane pass occupies residues 1109 to 1133 (LAPAPSYWLTTLFVMFFALIPFFVF). Residues 1134 to 1203 (KSVQMRFFPG…DQLNKNFIAF (70 aa)) lie on the Cytoplasmic side of the membrane.

It belongs to the cation transport ATPase (P-type) (TC 3.A.3) family. Type IV subfamily.

The protein localises to the membrane. The enzyme catalyses ATP + H2O + phospholipidSide 1 = ADP + phosphate + phospholipidSide 2.. In terms of biological role, involved in transport of phospholipids. The protein is Probable phospholipid-transporting ATPase 11 of Arabidopsis thaliana (Mouse-ear cress).